We begin with the raw amino-acid sequence, 141 residues long: Hemoglobin subunit alpha (141 aa).

The Globin domain maps to 1-141 (VLSSADKTNI…VSTVLTSKYR (141 aa)). Position 3 is a phosphoserine (S3). Residue K7 is modified to N6-succinyllysine. At T8 the chain carries Phosphothreonine. An N6-succinyllysine modification is found at K11. K16 is modified (N6-acetyllysine; alternate). K16 carries the post-translational modification N6-succinyllysine; alternate. Y24 bears the Phosphotyrosine mark. Position 35 is a phosphoserine (S35). K40 is modified (N6-succinyllysine). S49 carries the post-translational modification Phosphoserine. H58 serves as a coordination point for O2. H87 contributes to the heme b binding site. S102 is subject to Phosphoserine. T108 carries the phosphothreonine modification. A phosphoserine mark is found at S124 and S131. T134 and T137 each carry phosphothreonine. S138 is subject to Phosphoserine.

The protein belongs to the globin family. In terms of assembly, heterotetramer of two alpha chains and two beta chains. As to expression, red blood cells.

In terms of biological role, involved in oxygen transport from the lung to the various peripheral tissues. Hemopressin acts as an antagonist peptide of the cannabinoid receptor CNR1. Hemopressin-binding efficiently blocks cannabinoid receptor CNR1 and subsequent signaling. The chain is Hemoglobin subunit alpha (HBA) from Rousettus aegyptiacus (Egyptian fruit bat).